A 434-amino-acid chain; its full sequence is Xylose isomerase (434 aa).

Active-site residues include H100 and D103. Mg(2+) is bound by residues E231, E267, H270, D295, D306, D308, and D338.

Belongs to the xylose isomerase family. Homotetramer. The cofactor is Mg(2+).

Its subcellular location is the cytoplasm. The catalysed reaction is alpha-D-xylose = alpha-D-xylulofuranose. The polypeptide is Xylose isomerase (Ruegeria pomeroyi (strain ATCC 700808 / DSM 15171 / DSS-3) (Silicibacter pomeroyi)).